Consider the following 390-residue polypeptide: S-adenosylmethionine synthase 3 (390 aa).

E9 provides a ligand contact to Mg(2+). An ATP-binding site is contributed by H15. E43 is a binding site for K(+). L-methionine contacts are provided by E56 and Q99. ATP is bound by residues 167 to 169, 235 to 238, D246, 252 to 253, A269, K273, and K277; these read DGK, SGRF, and RK. L-methionine is bound at residue D246. K277 contacts L-methionine.

Belongs to the AdoMet synthase family. As to quaternary structure, homotetramer. Mn(2+) serves as cofactor. Mg(2+) is required as a cofactor. Requires Co(2+) as cofactor. The cofactor is K(+). Mostly expressed in stems and leaves.

It localises to the cytoplasm. The catalysed reaction is L-methionine + ATP + H2O = S-adenosyl-L-methionine + phosphate + diphosphate. It functions in the pathway amino-acid biosynthesis; S-adenosyl-L-methionine biosynthesis; S-adenosyl-L-methionine from L-methionine: step 1/1. In terms of biological role, catalyzes the formation of S-adenosylmethionine from methionine and ATP. The reaction comprises two steps that are both catalyzed by the same enzyme: formation of S-adenosylmethionine (AdoMet) and triphosphate, and subsequent hydrolysis of the triphosphate. This is S-adenosylmethionine synthase 3 (SAM3) from Solanum lycopersicum (Tomato).